The sequence spans 342 residues: Vancomycin B-type resistance protein VanB (342 aa).

ATP contacts are provided by residues Lys132, 168–170 (FVK), 176–177 (SS), 206–213 (EQAISGCE), and Phe240. An ATP-grasp domain is found at 136–337 (YILTKNAGIA…LPALIDSLIT (202 aa)). His243 is a substrate binding site. Residue 303–304 (NE) coordinates ATP. 2 residues coordinate Mg(2+): Glu304 and Asn306.

It belongs to the D-alanine--D-alanine ligase family. Requires Mg(2+) as cofactor. The cofactor is Mn(2+).

The protein resides in the cell membrane. It carries out the reaction (R)-lactate + D-alanine + ATP = D-alanyl-(R)-lactate + ADP + phosphate. Its function is as follows. Required for high-level resistance to glycopeptides antibiotics. D-Ala--D-Ala ligase of altered specificity which catalyzes ester bond formation between D-Ala and various D-hydroxy acids; producing a peptidoglycan which does not terminate in D-alanine but in D-lactate, thus preventing vancomycin binding. This Enterococcus faecalis (strain ATCC 700802 / V583) protein is Vancomycin B-type resistance protein VanB (vanB).